Consider the following 307-residue polypeptide: Thioredoxin reductase (307 aa).

36–43 is an FAD binding site; it reads DNAAPGGK. A disulfide bridge connects residues Cys138 and Cys141. Residue 278-287 coordinates FAD; the sequence is DIRIKDIRQI.

This sequence belongs to the class-II pyridine nucleotide-disulfide oxidoreductase family. As to quaternary structure, homodimer. FAD is required as a cofactor.

The protein resides in the cytoplasm. The catalysed reaction is [thioredoxin]-dithiol + NADP(+) = [thioredoxin]-disulfide + NADPH + H(+). The sequence is that of Thioredoxin reductase (trxB) from Mycoplasmopsis pulmonis (strain UAB CTIP) (Mycoplasma pulmonis).